Reading from the N-terminus, the 545-residue chain is Chaperonin GroEL 3 (545 aa).

Residues 29–32 (TLGP), 86–90 (DGTTT), G413, 479–481 (DAV), and D495 each bind ATP. The interval 526–545 (DKQAKAPAGVGPGPGEGFDY) is disordered. Over residues 535-545 (VGPGPGEGFDY) the composition is skewed to gly residues.

It belongs to the chaperonin (HSP60) family. In terms of assembly, forms a cylinder of 14 subunits composed of two heptameric rings stacked back-to-back. Interacts with the co-chaperonin GroES.

The protein resides in the cytoplasm. The enzyme catalyses ATP + H2O + a folded polypeptide = ADP + phosphate + an unfolded polypeptide.. In terms of biological role, together with its co-chaperonin GroES, plays an essential role in assisting protein folding. The GroEL-GroES system forms a nano-cage that allows encapsulation of the non-native substrate proteins and provides a physical environment optimized to promote and accelerate protein folding. The polypeptide is Chaperonin GroEL 3 (Trichormus variabilis (strain ATCC 29413 / PCC 7937) (Anabaena variabilis)).